A 166-amino-acid chain; its full sequence is Large ribosomal subunit protein uL10 (166 aa).

It belongs to the universal ribosomal protein uL10 family. In terms of assembly, part of the ribosomal stalk of the 50S ribosomal subunit. The N-terminus interacts with L11 and the large rRNA to form the base of the stalk. The C-terminus forms an elongated spine to which L12 dimers bind in a sequential fashion forming a multimeric L10(L12)X complex.

Its function is as follows. Forms part of the ribosomal stalk, playing a central role in the interaction of the ribosome with GTP-bound translation factors. This chain is Large ribosomal subunit protein uL10, found in Pseudomonas entomophila (strain L48).